Here is a 245-residue protein sequence, read N- to C-terminus: Phosphoribosyl isomerase A (245 aa).

D11 serves as the catalytic Proton acceptor. The active-site Proton donor is the D130.

This sequence belongs to the HisA/HisF family.

The protein resides in the cytoplasm. The catalysed reaction is 1-(5-phospho-beta-D-ribosyl)-5-[(5-phospho-beta-D-ribosylamino)methylideneamino]imidazole-4-carboxamide = 5-[(5-phospho-1-deoxy-D-ribulos-1-ylimino)methylamino]-1-(5-phospho-beta-D-ribosyl)imidazole-4-carboxamide. It carries out the reaction N-(5-phospho-beta-D-ribosyl)anthranilate = 1-(2-carboxyphenylamino)-1-deoxy-D-ribulose 5-phosphate. It functions in the pathway amino-acid biosynthesis; L-histidine biosynthesis; L-histidine from 5-phospho-alpha-D-ribose 1-diphosphate: step 4/9. The protein operates within amino-acid biosynthesis; L-tryptophan biosynthesis; L-tryptophan from chorismate: step 3/5. In terms of biological role, involved in both the histidine and tryptophan biosynthetic pathways. The protein is Phosphoribosyl isomerase A (priA) of Mycobacterium bovis (strain ATCC BAA-935 / AF2122/97).